The primary structure comprises 165 residues: uncharacterized protein (165 aa).

Positions 1–36 are disordered; the sequence is MTRLCLPRPEAREDPIPVPPRGLGAGEGSGSPVRPP. The helical transmembrane segment at 135–155 threads the bilayer; it reads LLLLMGLGPLLRACGMPLTLL.

It is found in the membrane. This is an uncharacterized protein from Homo sapiens (Human).